The chain runs to 352 residues: Molybdenum import ATP-binding protein ModC (352 aa).

Positions 1–229 constitute an ABC transporter domain; sequence MLELNFSQTL…SVMNPWLPKE (229 aa). 31–38 is a binding site for ATP; the sequence is GVSGAGKT. Residues 289-352 enclose the Mop domain; it reads QTSIRNVLRA…AQIKSVSITA (64 aa).

It belongs to the ABC transporter superfamily. Molybdate importer (TC 3.A.1.8) family. The complex is composed of two ATP-binding proteins (ModC), two transmembrane proteins (ModB) and a solute-binding protein (ModA).

The protein resides in the cell inner membrane. The catalysed reaction is molybdate(out) + ATP + H2O = molybdate(in) + ADP + phosphate + H(+). Part of the ABC transporter complex ModABC involved in molybdenum import. Responsible for energy coupling to the transport system. The sequence is that of Molybdenum import ATP-binding protein ModC from Shigella dysenteriae serotype 1 (strain Sd197).